Here is a 429-residue protein sequence, read N- to C-terminus: Cyclin-B2-1 (429 aa).

The protein belongs to the cyclin family. Cyclin AB subfamily. Interacts with CDC20-1 and CDC20-2. In terms of tissue distribution, expressed in roots, stems, leaves, flowers and siliques.

The sequence is that of Cyclin-B2-1 (CYCB2-1) from Arabidopsis thaliana (Mouse-ear cress).